Here is a 375-residue protein sequence, read N- to C-terminus: Lipid-A-disaccharide synthase (375 aa).

It belongs to the LpxB family.

It catalyses the reaction a lipid X + a UDP-2-N,3-O-bis[(3R)-3-hydroxyacyl]-alpha-D-glucosamine = a lipid A disaccharide + UDP + H(+). Its pathway is bacterial outer membrane biogenesis; LPS lipid A biosynthesis. In terms of biological role, condensation of UDP-2,3-diacylglucosamine and 2,3-diacylglucosamine-1-phosphate to form lipid A disaccharide, a precursor of lipid A, a phosphorylated glycolipid that anchors the lipopolysaccharide to the outer membrane of the cell. This Pseudomonas putida (strain ATCC 47054 / DSM 6125 / CFBP 8728 / NCIMB 11950 / KT2440) protein is Lipid-A-disaccharide synthase.